The following is a 452-amino-acid chain: Probable phosphoglucosamine mutase (452 aa).

The active-site Phosphoserine intermediate is serine 96. Residues serine 96, aspartate 235, aspartate 237, and aspartate 239 each contribute to the Mg(2+) site. A Phosphoserine modification is found at serine 96.

It belongs to the phosphohexose mutase family. The cofactor is Mg(2+). Post-translationally, activated by phosphorylation.

It catalyses the reaction alpha-D-glucosamine 1-phosphate = D-glucosamine 6-phosphate. In terms of biological role, catalyzes the conversion of glucosamine-6-phosphate to glucosamine-1-phosphate. The sequence is that of Probable phosphoglucosamine mutase from Methanopyrus kandleri (strain AV19 / DSM 6324 / JCM 9639 / NBRC 100938).